Here is a 412-residue protein sequence, read N- to C-terminus: Serine hydroxymethyltransferase (412 aa).

Residues Leu120 and 124–126 (GHL) each bind (6S)-5,6,7,8-tetrahydrofolate. Lys229 is subject to N6-(pyridoxal phosphate)lysine. 352-354 (SPF) is a (6S)-5,6,7,8-tetrahydrofolate binding site.

Belongs to the SHMT family. Homodimer. Requires pyridoxal 5'-phosphate as cofactor.

The protein resides in the cytoplasm. It catalyses the reaction (6R)-5,10-methylene-5,6,7,8-tetrahydrofolate + glycine + H2O = (6S)-5,6,7,8-tetrahydrofolate + L-serine. It participates in one-carbon metabolism; tetrahydrofolate interconversion. The protein operates within amino-acid biosynthesis; glycine biosynthesis; glycine from L-serine: step 1/1. Functionally, catalyzes the reversible interconversion of serine and glycine with tetrahydrofolate (THF) serving as the one-carbon carrier. This reaction serves as the major source of one-carbon groups required for the biosynthesis of purines, thymidylate, methionine, and other important biomolecules. Also exhibits THF-independent aldolase activity toward beta-hydroxyamino acids, producing glycine and aldehydes, via a retro-aldol mechanism. The sequence is that of Serine hydroxymethyltransferase from Ruminiclostridium cellulolyticum (strain ATCC 35319 / DSM 5812 / JCM 6584 / H10) (Clostridium cellulolyticum).